Here is a 582-residue protein sequence, read N- to C-terminus: mRNA-decapping enzyme 1A (582 aa).

A Phosphoserine modification is found at S62. Basic and acidic residues predominate over residues 132 to 141; that stretch reads RSQQAARDKQ. Disordered regions lie at residues 132 to 154 and 172 to 214; these read RSQQ…DHRP and QMGD…PSGH. Residues S142, S179, S180, S315, S319, and S334 each carry the phosphoserine modification. Positions 173-196 are enriched in polar residues; the sequence is MGDSNISSPGLQPSTQLSNLGSTE. T348 carries the phosphothreonine modification. The residue at position 353 (S353) is a Phosphoserine. R376 is modified (asymmetric dimethylarginine). T401 bears the Phosphothreonine mark. Phosphoserine occurs at positions 422, 522, 523, and 525. The segment at 513–536 is disordered; the sequence is RSSDLERKASSPSPLTIGTPESQR. Polar residues predominate over residues 522–533; sequence SSPSPLTIGTPE. Phosphothreonine is present on residues T528 and T531.

The protein belongs to the DCP1 family. As to quaternary structure, (Microbial infection) Interacts with rotavirus A non-structural protein 2; this interaction probably plays a role in the sequestration of DCP1A in viral factories. Interacts with rotavirus A non-structural protein 5; this interaction probably plays a role in its sequestration in viral factories. In terms of assembly, forms a complex with EDC3, DCP2, DDX6 and EDC4/HEDLS, within this complex directly interacts with EDC3. Part of a cytoplasmic complex containing proteins involved in mRNA decay, including XRN1 and LSM1. Interacts with DCP1B. Interacts with DCP2. Interacts with DDX17 in an RNA-independent manner. Interacts with PNRC2. Interacts with SMAD4. Interacts with UPF1. Interacts with ZC3HAV1. Interacts with ZFP36L1. Interacts with NBDY. Interacts with DHX34; the interaction is RNA-independent. As to expression, detected in heart, brain, placenta, lung, skeletal muscle, liver, kidney and pancreas.

The protein localises to the cytoplasm. It is found in the P-body. Its subcellular location is the nucleus. The catalysed reaction is a 5'-end (N(7)-methyl 5'-triphosphoguanosine)-ribonucleoside in mRNA + H2O = N(7)-methyl-GDP + a 5'-end phospho-ribonucleoside in mRNA + 2 H(+). Necessary for the degradation of mRNAs, both in normal mRNA turnover and in nonsense-mediated mRNA decay. Removes the 7-methyl guanine cap structure from mRNA molecules, yielding a 5'-phosphorylated mRNA fragment and 7m-GDP. Contributes to the transactivation of target genes after stimulation by TGFB1. Essential for embryonic development. In Homo sapiens (Human), this protein is mRNA-decapping enzyme 1A (DCP1A).